Here is a 185-residue protein sequence, read N- to C-terminus: TATA-box-binding protein (185 aa).

2 repeat units span residues 3 to 78 (IQNI…REDL) and 94 to 176 (IQNI…AEKI).

The protein belongs to the TBP family.

In terms of biological role, general factor that plays a role in the activation of archaeal genes transcribed by RNA polymerase. Binds specifically to the TATA box promoter element which lies close to the position of transcription initiation. This is TATA-box-binding protein from Methanopyrus kandleri (strain AV19 / DSM 6324 / JCM 9639 / NBRC 100938).